Reading from the N-terminus, the 295-residue chain is MKFGKSLSSQIVETLPEWRDKFLSYKDLKKRLKLIGGGGGGEERQAKRARVAADGGEEEAAAAAMTPEEAGFMRLLEAELDKFNSFFVEKEEEYIIRQKELQDRVARAAGRESKEELMRVRKEIVDFHGEMVLLENYSALNYTGLVKILKKYDKRTGALIRLPFIQKVLQQPFFTTDLLYKLVKQCEAMLDQLLPSNELSVSSEDGRGDSTNEDKPSNPSSSLVNGGTIPELDEIEYMESMYMKGTVAALRSLKEIRSGSSTVSAFSLPPLQGDSSPEEQQELWNKIPVIEQAAK.

In terms of domain architecture, SPX spans 1–166; that stretch reads MKFGKSLSSQ…GALIRLPFIQ (166 aa). The disordered stretch occupies residues 199 to 227; sequence LSVSSEDGRGDSTNEDKPSNPSSSLVNGG. The segment covering 204–216 has biased composition (basic and acidic residues); sequence EDGRGDSTNEDKP.

As to quaternary structure, interacts (via SPX domain) with PHR2 (via C-terminus). Interacts with RLI1 in the nucleus to prevents its positive regulation of leaf inclination during phosphate (Pi) starvation. As to expression, predominantly expressed in roots and leaves. Localized in leaves lamina joints.

The protein localises to the nucleus. Involved in plant adaptation to phosphate (Pi) starvation. Inhibits PHR2 DNA-binding activity via a Pi-dependent protein interaction. Suppresses the regulation on expression of PT2 by PHR2 and accumulation of shoot Pi. Optimizes growth under phosphate-limited conditions through a negative feedback loop of the PSI (phosphate starvation-induced) signaling pathway. Regulates the expression of SPX2, SPX3 and SPX5. May be an important link between signal transduction pathways related to phosphate starvation and cold stress. Together with SPX2, plays a negative role in the regulation of leaf inclination by preventing RLI1 transcription factor activity in Pi depleted conditions. The protein is SPX domain-containing protein 1 of Oryza sativa subsp. japonica (Rice).